The chain runs to 336 residues: Galactose/methyl galactoside import permease protein MglC (336 aa).

The Periplasmic portion of the chain corresponds to 1–16 (MSALNKKSFLTYLKEG). Residues 17–37 (GIYVVLLVLLAIIIFQDPTFL) form a helical membrane-spanning segment. At 38–52 (SLLNLSNILTQSSVR) the chain is on the cytoplasmic side. The helical transmembrane segment at 53–73 (IIIALGVAGLIVTQGTDLSAG) threads the bilayer. Residues 74 to 106 (RQVGLAAVVAATLLQSMDNANKVFPEMATMPIA) are Periplasmic-facing. 2 helical membrane passes run 107–127 (LVILIVCAIGAVIGLINGLII) and 128–148 (AYLNVTPFITTLGTMIIVYGI). The Periplasmic portion of the chain corresponds to 149–180 (NSLYYDFVGASPISGFDSGFSTFAQGFVALGS). Residues 181-201 (FRLSYITFYALIAVAFVWVLW) traverse the membrane as a helical segment. Topologically, residues 202–226 (NKTRFGKNIFAIGGNPEAAKVSGVN) are cytoplasmic. The helical transmembrane segment at 227-247 (VGLNLLMIYALSGVFYAFGGM) threads the bilayer. Over 248 to 256 (LEAGRIGSA) the chain is Periplasmic. The helical transmembrane segment at 257 to 277 (TNNLGFMYELDAIAACVVGGV) threads the bilayer. Position 278 (Ser278) is a topological domain, cytoplasmic. A helical membrane pass occupies residues 279 to 299 (FSGGVGTVIGVVTGVIIFTVI). The Periplasmic portion of the chain corresponds to 300-305 (NYGLTY). The chain crosses the membrane as a helical span at residues 306 to 326 (IGVNPYWQYIIKGAIIIFAVA). Topologically, residues 327 to 336 (LDSLKYARKK) are cytoplasmic.

The protein belongs to the binding-protein-dependent transport system permease family. AraH/RbsC subfamily. In terms of assembly, the complex is composed of one ATP-binding protein (MglA), two transmembrane proteins (MglC) and a solute-binding protein (MglB).

It is found in the cell inner membrane. Part of the ABC transporter complex MglABC involved in galactose/methyl galactoside import. Probably responsible for the translocation of the substrate across the membrane. The chain is Galactose/methyl galactoside import permease protein MglC (mglC) from Escherichia coli (strain K12).